The primary structure comprises 415 residues: Queuine tRNA-ribosyltransferase accessory subunit 2 (415 aa).

4 residues coordinate Zn(2+): C351, C353, C356, and H382.

Belongs to the queuine tRNA-ribosyltransferase family. QTRT2 subfamily. Heterodimer of a catalytic subunit QTRT1 and an accessory subunit QTRT2. Zn(2+) serves as cofactor.

It is found in the cytoplasm. Its subcellular location is the mitochondrion outer membrane. In terms of biological role, non-catalytic subunit of the queuine tRNA-ribosyltransferase (TGT) that catalyzes the base-exchange of a guanine (G) residue with queuine (Q) at position 34 (anticodon wobble position) in tRNAs with GU(N) anticodons (tRNA-Asp, -Asn, -His and -Tyr), resulting in the hypermodified nucleoside queuosine (7-(((4,5-cis-dihydroxy-2-cyclopenten-1-yl)amino)methyl)-7-deazaguanosine). The sequence is that of Queuine tRNA-ribosyltransferase accessory subunit 2 from Homo sapiens (Human).